A 399-amino-acid chain; its full sequence is Forkhead box protein A4 (399 aa).

A DNA-binding region (fork-head) is located at residues 119 to 213 (KPPYSYISLI…ENGCYLRRQK (95 aa)). Residues 219 to 234 (RSKSGEREKKVNKPGD) show a composition bias toward basic and acidic residues. The interval 219–290 (RSKSGEREKK…VGLSPTSEQA (72 aa)) is disordered. Polar residues predominate over residues 267–277 (STGSSIHQASG).

It is found in the nucleus. In terms of biological role, transcriptional repressor involved in embryonic nervous system development. Plays a role in the induction and patterning of the anterior-posterior neural axis. Involved in the establishment of floor plate differentiation from neural plate cells during gastrulation. Binds the anf1 promoter sequence to restrict expression of anf1 to the anterior of the neural plate, thereby patterning the forebrain. Can bind to the HNF-3-alpha DNA target sequence. Cooperates with t/bra in a dose-dependent manner to specify dorsal mesoderm formation, including notochord. May be involved in the dorso-ventral patterning of the mesoderm. Binds to DNA via the target sequence 5'-[GA]TAAA[TC]A-3', with 5'-GTAAATA-3' being the preferred binding site. This Xenopus tropicalis (Western clawed frog) protein is Forkhead box protein A4.